Consider the following 349-residue polypeptide: Isopentenyl-diphosphate delta-isomerase (349 aa).

Position 6–7 (6–7 (RK)) interacts with substrate. Residues 62–64 (AMT), S93, and N122 contribute to the FMN site. Q152 is a substrate binding site. Position 153 (E153) interacts with Mg(2+). FMN-binding positions include K184, T214, 258–259 (GG), and 280–281 (AG).

Belongs to the IPP isomerase type 2 family. As to quaternary structure, homooctamer. Dimer of tetramers. Requires FMN as cofactor. It depends on NADPH as a cofactor. The cofactor is Mg(2+).

The protein localises to the cytoplasm. The catalysed reaction is isopentenyl diphosphate = dimethylallyl diphosphate. Involved in the biosynthesis of isoprenoids. Catalyzes the 1,3-allylic rearrangement of the homoallylic substrate isopentenyl (IPP) to its allylic isomer, dimethylallyl diphosphate (DMAPP). The sequence is that of Isopentenyl-diphosphate delta-isomerase from Bacillus cereus (strain ZK / E33L).